The primary structure comprises 338 residues: Nicotinate-nucleotide--dimethylbenzimidazole phosphoribosyltransferase (338 aa).

Glu-306 acts as the Proton acceptor in catalysis.

Belongs to the CobT family.

The catalysed reaction is 5,6-dimethylbenzimidazole + nicotinate beta-D-ribonucleotide = alpha-ribazole 5'-phosphate + nicotinate + H(+). It participates in nucleoside biosynthesis; alpha-ribazole biosynthesis; alpha-ribazole from 5,6-dimethylbenzimidazole: step 1/2. In terms of biological role, catalyzes the synthesis of alpha-ribazole-5'-phosphate from nicotinate mononucleotide (NAMN) and 5,6-dimethylbenzimidazole (DMB). The polypeptide is Nicotinate-nucleotide--dimethylbenzimidazole phosphoribosyltransferase (Cereibacter sphaeroides (strain KD131 / KCTC 12085) (Rhodobacter sphaeroides)).